Here is a 75-residue protein sequence, read N- to C-terminus: uncharacterized protein (75 aa).

This is an uncharacterized protein from Mycobacterium tuberculosis (strain CDC 1551 / Oshkosh).